We begin with the raw amino-acid sequence, 699 residues long: Epithelial sodium channel subunit alpha (699 aa).

The interval 1-71 (MLDHTRAPEL…EPRQPTEEEE (71 aa)) is disordered. The Cytoplasmic portion of the chain corresponds to 1-110 (MLDHTRAPEL…CSKHNRMKTA (110 aa)). Residues 111–131 (FWAVLWLCTFGMMYWQFALLF) form a helical membrane-spanning segment. At 132–589 (EEYFSYPVSL…SQWSLWFGSS (458 aa)) the chain is on the extracellular side. 10 disulfides stabilise this stretch: C158–C332, C256–C263, C309–C316, C421–C506, C443–C483, C443–C502, C447–C498, C456–C483, C456–C506, and C458–C472. The tract at residues 200–270 (RRRSTRDLRG…SDCFYQTYSS (71 aa)) is gating release of inhibition by proteolysis (GRIP); protease-sensitive region that is responsible for the proteolytic activation of the channel. A disordered region spans residues 211-244 (LPHPLQRLRTPPPPNPARSARSASSSVRDNNPQV). Residues 227–238 (ARSARSASSSVR) are compositionally biased toward low complexity. The helical transmembrane segment at 590–610 (VLSVVEMAELIFDLLVITLIM) threads the bilayer. The Cytoplasmic portion of the chain corresponds to 611 to 699 (LLHRFRSRYW…SSACAPAMAL (89 aa)). Residues 637–699 (ASSFPSRFCP…SSACAPAMAL (63 aa)) are disordered. Residues 656-667 (PQQGTTPPLALT) are compositionally biased toward low complexity. A PY motif; recruits WW domain-containing proteins and is thereby required for ubiquitination and inhibition of the channel by NEDD4 and NEDD4L motif is present at residues 669–673 (PPPAY).

This sequence belongs to the amiloride-sensitive sodium channel (TC 1.A.6) family. SCNN1A subfamily. In terms of assembly, heterotrimer; containing an alpha/SCNN1A, a beta/SCNN1B and a gamma/SCNN1G subunit. Interacts with WWP1 (via WW domains). Interacts with WWP2 (via WW domains); inhibits the channel. Interacts with BPIFA1; the interaction is indirect via SCNN1B and inhibits the proteolytic processing of SCNN1A and SCNN1G and the activation of ENaC. Interacts with the full-length immature form of PCSK9 (pro-PCSK9). Post-translationally, ubiquitinated. Can be ubiquitinated at multiple sites and undergo monoubiquitination and polyubiquitination. Ubiquitination by NEDD4 or NEDD4L inhibits the ENaC channel through endocytosis, intracellular retention and degradation of its individual subunits. In terms of processing, ENaC is activated through the proteolytic maturation of its subunits. Furin cleaves the SCNN1A subunit, which results in a stepwise increase in the open probability of the channel due to the release of an inhibitory tract. BPIFA1, which is recruited by the SCNN1B subunit, prevents the proteolytic activation of ENaC. N-glycosylated. As to expression, expressed in kidney (at protein level). Expressed in lung (at protein level). Expressed in the epididymis (at protein level). In the caput and corpus regions of the epididymis, expressed uniformly on the luminal and basal surfaces of the ducts and in the sperm in the duct lumen. Also expressed in distal colon and, at low levels, in liver.

Its subcellular location is the apical cell membrane. It localises to the cell projection. The protein resides in the cilium. It is found in the cytoplasmic granule. The protein localises to the cytoplasm. Its subcellular location is the cytoplasmic vesicle. It localises to the secretory vesicle. The protein resides in the acrosome. It is found in the flagellum. The catalysed reaction is Na(+)(in) = Na(+)(out). Its activity is regulated as follows. Originally identified and characterized by its inhibition by the diuretic drug amiloride. This is one of the three pore-forming subunits of the heterotrimeric epithelial sodium channel (ENaC), a critical regulator of sodium balance and fluid homeostasis. ENaC operates in epithelial tissues, where it mediates the electrodiffusion of sodium ions from extracellular fluid through the apical membrane of cells, with water following osmotically. It plays a key role in maintaining sodium homeostasis through electrogenic sodium reabsorption in the kidneys. Additionally, ENaC is essential for airway surface liquid homeostasis, which is crucial for proper mucus clearance. The sequence is that of Epithelial sodium channel subunit alpha from Mus musculus (Mouse).